The following is a 386-amino-acid chain: Patatin group M-1 (386 aa).

An N-terminal signal peptide occupies residues 1–23; that stretch reads MATTKSFLILFFMILATTSSTCA. A PNPLA domain is found at 32–229; the sequence is LSIDGGGIKG…TVGDPALLSL (198 aa). A GXGXXG motif is present at residues 36 to 41; the sequence is GGGIKG. Positions 75–79 match the GXSXG motif; it reads GTSTG. S77 functions as the Nucleophile in the catalytic mechanism. N115 is a glycosylation site (N-linked (GlcNAc...) asparagine). D215 (proton acceptor) is an active-site residue. The short motif at 215–217 is the DGA/G element; the sequence is DGG.

It belongs to the patatin family. In terms of tissue distribution, tuber.

Its subcellular location is the vacuole. Probable lipolytic acyl hydrolase (LAH), an activity which is thought to be involved in the response of tubers to pathogens. This chain is Patatin group M-1, found in Solanum tuberosum (Potato).